The primary structure comprises 431 residues: Enolase (431 aa).

A (2R)-2-phosphoglycerate-binding site is contributed by Gln-167. The Proton donor role is filled by Glu-209. Residues Asp-246, Glu-289, and Asp-316 each coordinate Mg(2+). Lys-341, Arg-370, Ser-371, and Lys-392 together coordinate (2R)-2-phosphoglycerate. Lys-341 functions as the Proton acceptor in the catalytic mechanism.

This sequence belongs to the enolase family. As to quaternary structure, component of the RNA degradosome, a multiprotein complex involved in RNA processing and mRNA degradation. It depends on Mg(2+) as a cofactor.

Its subcellular location is the cytoplasm. It is found in the secreted. It localises to the cell surface. It carries out the reaction (2R)-2-phosphoglycerate = phosphoenolpyruvate + H2O. It functions in the pathway carbohydrate degradation; glycolysis; pyruvate from D-glyceraldehyde 3-phosphate: step 4/5. Catalyzes the reversible conversion of 2-phosphoglycerate (2-PG) into phosphoenolpyruvate (PEP). It is essential for the degradation of carbohydrates via glycolysis. The polypeptide is Enolase (Shewanella loihica (strain ATCC BAA-1088 / PV-4)).